A 404-amino-acid chain; its full sequence is Tryptophan synthase beta chain (404 aa).

Lys91 carries the post-translational modification N6-(pyridoxal phosphate)lysine.

It belongs to the TrpB family. In terms of assembly, tetramer of two alpha and two beta chains. Requires pyridoxal 5'-phosphate as cofactor.

The catalysed reaction is (1S,2R)-1-C-(indol-3-yl)glycerol 3-phosphate + L-serine = D-glyceraldehyde 3-phosphate + L-tryptophan + H2O. It participates in amino-acid biosynthesis; L-tryptophan biosynthesis; L-tryptophan from chorismate: step 5/5. The beta subunit is responsible for the synthesis of L-tryptophan from indole and L-serine. This chain is Tryptophan synthase beta chain, found in Clavibacter michiganensis subsp. michiganensis (strain NCPPB 382).